Here is a 181-residue protein sequence, read N- to C-terminus: Ribosome maturation factor RimP (181 aa).

The protein belongs to the RimP family.

It localises to the cytoplasm. Required for maturation of 30S ribosomal subunits. This Sphingopyxis alaskensis (strain DSM 13593 / LMG 18877 / RB2256) (Sphingomonas alaskensis) protein is Ribosome maturation factor RimP.